A 476-amino-acid chain; its full sequence is C-terminal-binding protein (476 aa).

Residues serine 100, 180–185 (VGLGRI), aspartate 204, 237–243 (CTLNEHN), 264–266 (TAR), and aspartate 290 each bind NAD(+). The active site involves arginine 266. Glutamate 295 is an active-site residue. The active-site Proton donor is histidine 315. Position 315–318 (315–318 (HAAF)) interacts with NAD(+). The tract at residues 445–476 (VSSQSPLSAPDPNNHLSSSIKTEVKAESTEAP) is disordered. The span at 466–476 (TEVKAESTEAP) shows a compositional bias: basic and acidic residues.

The protein belongs to the D-isomer specific 2-hydroxyacid dehydrogenase family. Homodimer. Interacts with hairy (hry), knirps (kni), snail (sna), and Enhancer of split m-delta (HLHm-delta). Complex may be involved in transcriptional repression. Also interacts with adenovirus E1A protein.

Its subcellular location is the nucleus. Its function is as follows. Corepressor targeting diverse transcription regulators. Hairy-interacting protein required for embryonic segmentation and hairy-mediated transcriptional repression. The chain is C-terminal-binding protein (CtBP) from Drosophila melanogaster (Fruit fly).